The following is a 142-amino-acid chain: MDRITGPFRKSKKSFRKPLPPIQSGDRIDYQNIDLLRRFISQQGKILSRRVTRLTLKQQRLLNLAIKQARILSFLPFTNTESLEKMKARIREARLKAEEVRLKNKEARFKKAKEARNQKKTTFRKIFINPKNSKLNTETNQI.

The interval 1–21 (MDRITGPFRKSKKSFRKPLPP) is disordered.

It belongs to the bacterial ribosomal protein bS18 family. Part of the 30S ribosomal subunit.

Its subcellular location is the plastid. The chain is Small ribosomal subunit protein bS18c from Cuscuta gronovii (Common dodder).